Reading from the N-terminus, the 49-residue chain is MARFPEAEARLFNVKICMRCNARNPMKARVCRKCGYKGLRPKSKERKGR.

The protein belongs to the eukaryotic ribosomal protein eL40 family.

This chain is Large ribosomal subunit protein eL40, found in Archaeoglobus fulgidus (strain ATCC 49558 / DSM 4304 / JCM 9628 / NBRC 100126 / VC-16).